The chain runs to 310 residues: Carbamate kinase 1 (310 aa).

It belongs to the carbamate kinase family.

It localises to the cytoplasm. It carries out the reaction hydrogencarbonate + NH4(+) + ATP = carbamoyl phosphate + ADP + H2O + H(+). The protein operates within metabolic intermediate metabolism; carbamoyl phosphate degradation; CO(2) and NH(3) from carbamoyl phosphate: step 1/1. This Staphylococcus aureus (strain COL) protein is Carbamate kinase 1 (arcC1).